Here is a 306-residue protein sequence, read N- to C-terminus: Palmitoyl-protein thioesterase 1 (306 aa).

The signal sequence occupies residues 1–27 (MASPGCLWLLAVALLPWTCASRALQHL). Cys6 carries the S-palmitoyl cysteine; by ZDHHC3 and ZDHHC7 lipid modification. 3 disulfides stabilise this stretch: Cys45-Cys46, Cys96-Cys128, and Cys152-Cys160. The active site involves Ser115. N-linked (GlcNAc...) asparagine glycosylation is found at Asn197, Asn212, and Asn232. Residues Asp233 and His289 contribute to the active site.

It belongs to the palmitoyl-protein thioesterase family. As to quaternary structure, interacts with CLN5. Interacts with ATP5F1A and ATP5F1B. Glycosylated.

It localises to the lysosome. The protein localises to the secreted. It is found in the golgi apparatus. The protein resides in the endoplasmic reticulum. The enzyme catalyses S-hexadecanoyl-L-cysteinyl-[protein] + H2O = L-cysteinyl-[protein] + hexadecanoate + H(+). It catalyses the reaction hexadecanoyl-CoA + H2O = hexadecanoate + CoA + H(+). It carries out the reaction S-hexadecanoyl-N-acetylcysteamine + H2O = N-acetylcysteamine + hexadecanoate + H(+). The catalysed reaction is S-hexadecanoyl-N-acetylcysteine methyl ester + H2O = N-acetylcysteine methyl ester + hexadecanoate + H(+). With respect to regulation, palmitoylation reduces PPT1 enzymatic activity. In terms of biological role, has thioesterase activity against fatty acid thioesters with 14 -18 carbons, including palmitoyl-CoA, S-palmitoyl-N-acetylcysteamine, and palmitoylated proteins. In contrast to PPT2, PPT1 can hydrolyze palmitoylated proteins and palmitoylcysteine. The sequence is that of Palmitoyl-protein thioesterase 1 (PPT1) from Homo sapiens (Human).